The primary structure comprises 110 residues: PHD finger-like domain-containing protein 5A (110 aa).

N-acetylalanine is present on alanine 2. Lysine 3 carries the post-translational modification N6-acetyllysine. Residues cysteine 11, cysteine 23, cysteine 26, cysteine 30, cysteine 33, cysteine 46, cysteine 49, cysteine 58, cysteine 61, cysteine 72, and cysteine 75 each coordinate Zn(2+). Residues 35–51 (SYVRPCTLVRICDECNY) are interaction with SF3B1 and SF3B3. The interval 79–82 (EKDR) is interaction with SF3B3. Residue cysteine 85 participates in Zn(2+) binding. The residue at position 94 (serine 94) is a Phosphoserine.

It belongs to the PHF5 family. As to quaternary structure, component of the 17S U2 SnRNP complex, a ribonucleoprotein complex that contains small nuclear RNA (snRNA) U2 and a number of specific proteins. Part of the SF3B subcomplex of the 17S U2 SnRNP complex. SF3B associates with the splicing subcomplex SF3A and a 12S RNA unit to form the U2 small nuclear ribonucleoproteins complex (U2 snRNP). Within the SF3B complex interacts directly with SF3B1 and SF3B3. Component of the minor spliceosome, which splices U12-type introns. Within this complex, interacts with CRIPT. Interacts (via N-terminus) with U2AF1 and SRSF5; acts to bridge the two. Interacts (via C-terminus) with EP400 and DDX1; acts to bridge the two. Interacts with the PAF1 complex (PAF1C) composed of CDC73, PAF1, LEO1, CTR9, RTF1 and SKIC8. Within the PAF1C interacts directly with CDC73 and SKIC8. Interacts with RNA polymerase II. As to expression, expressed in primary spermatocytes (at protein level). Ubiquitously expressed in pre- and postnatal tissues. Highly expressed in pluripotent embryonic stem cells (ESCs) (at protein level) and induced pluripotent stem cells (iPSCs).

The protein resides in the nucleus. Its subcellular location is the nucleus speckle. Component of the 17S U2 SnRNP complex of the spliceosome, a large ribonucleoprotein complex that removes introns from transcribed pre-mRNAs. The 17S U2 SnRNP complex (1) directly participates in early spliceosome assembly and (2) mediates recognition of the intron branch site during pre-mRNA splicing by promoting the selection of the pre-mRNA branch-site adenosine, the nucleophile for the first step of splicing. Within the 17S U2 SnRNP complex, PHF5A is part of the SF3B subcomplex, which is required for 'A' complex assembly formed by the stable binding of U2 snRNP to the branchpoint sequence in pre-mRNA. Sequence independent binding of SF3A and SF3B subcomplexes upstream of the branch site is essential, it may anchor U2 snRNP to the pre-mRNA. Also acts as a component of the minor spliceosome, which is involved in the splicing of U12-type introns in pre-mRNAs. Also involved in elongation by RNA polymerase II as part of the PAF1 complex (PAF1C). PAF1C is required for maintenance of embryonic stem cell (ESC) self-renewal and cellular reprogramming of stem cells. Maintains pluripotency by recruiting and stabilizing PAF1C on pluripotency genes loci, and by regulating the expression of the pluripotency genes. Regulates the deposition of elongation-associated histone modifications, including dimethylated histone H3 'Lys-79' (H3K79me2) and trimethylated histone H3 'Lys-36' (H3K36me3), on PAF1C targets, self-renewal and pluripotency genes. Regulates RNA polymerase II promoter-proximal pause release of the PAF1C targets and self-renewal genes, and the levels of elongating ('Ser-2' phosphorylated) RNA polymerase II in their gene bodies. Regulates muscle specification in adult stem cells by stabilizing PAF1C in chromatin to promote myogenic differentiation. Acts as a transcriptional regulator by binding to the GJA1/Cx43 promoter and enhancing its up-regulation by ESR1/ER-alpha. This Mus musculus (Mouse) protein is PHD finger-like domain-containing protein 5A (Phf5a).